The sequence spans 204 residues: Guanylate kinase (204 aa).

The 179-residue stretch at 18 to 196 (PKLFTISAPA…SYEVLKSIFI (179 aa)) folds into the Guanylate kinase-like domain. 25–32 (APAGAGKT) contributes to the ATP binding site.

It belongs to the guanylate kinase family.

Its subcellular location is the cytoplasm. The enzyme catalyses GMP + ATP = GDP + ADP. In terms of biological role, essential for recycling GMP and indirectly, cGMP. In Chlamydia abortus (strain DSM 27085 / S26/3) (Chlamydophila abortus), this protein is Guanylate kinase.